Consider the following 238-residue polypeptide: NAD(P)H-hydrate epimerase (238 aa).

Residues 10–225 (AIKVDQILFN…ALQRQYELNL (216 aa)) enclose the YjeF N-terminal domain. 68–72 (NNGGD) is a (6S)-NADPHX binding site. Residues Asn69 and Asp133 each coordinate K(+). (6S)-NADPHX contacts are provided by residues 137–143 (GFSFKPP) and Asp166. Ser169 contacts K(+).

Belongs to the NnrE/AIBP family. K(+) serves as cofactor.

The catalysed reaction is (6R)-NADHX = (6S)-NADHX. It catalyses the reaction (6R)-NADPHX = (6S)-NADPHX. Its function is as follows. Catalyzes the epimerization of the S- and R-forms of NAD(P)HX, a damaged form of NAD(P)H that is a result of enzymatic or heat-dependent hydration. This is a prerequisite for the S-specific NAD(P)H-hydrate dehydratase to allow the repair of both epimers of NAD(P)HX. This is NAD(P)H-hydrate epimerase from Drosophila willistoni (Fruit fly).